The primary structure comprises 96 residues: uncharacterized protein (96 aa).

The first 23 residues, 1–23 (MKQFYSVVLTIIIYISSQSNVVS), serve as a signal peptide directing secretion. Disulfide bonds link cysteine 60–cysteine 74, cysteine 67–cysteine 78, and cysteine 73–cysteine 83.

The protein localises to the secreted. This is an uncharacterized protein from Schistosoma japonicum (Blood fluke).